A 381-amino-acid polypeptide reads, in one-letter code: Spermidine/putrescine import ATP-binding protein PotA (381 aa).

An ABC transporter domain is found at 22–252 (VELRNVFKFF…PKTSFVADFI (231 aa)). Residue 54 to 61 (GPSGCGKT) coordinates ATP.

Belongs to the ABC transporter superfamily. Spermidine/putrescine importer (TC 3.A.1.11.1) family. As to quaternary structure, the complex is composed of two ATP-binding proteins (PotA), two transmembrane proteins (PotB and PotC) and a solute-binding protein (PotD).

It localises to the cell inner membrane. It catalyses the reaction ATP + H2O + polyamine-[polyamine-binding protein]Side 1 = ADP + phosphate + polyamineSide 2 + [polyamine-binding protein]Side 1.. Part of the ABC transporter complex PotABCD involved in spermidine/putrescine import. Responsible for energy coupling to the transport system. The sequence is that of Spermidine/putrescine import ATP-binding protein PotA from Trichormus variabilis (strain ATCC 29413 / PCC 7937) (Anabaena variabilis).